The primary structure comprises 126 residues: Translation initiation factor 5A (126 aa).

The residue at position 36 (lysine 36) is a Hypusine.

The protein belongs to the eIF-5A family.

The protein resides in the cytoplasm. Functions by promoting the formation of the first peptide bond. The protein is Translation initiation factor 5A of Haloarcula marismortui (strain ATCC 43049 / DSM 3752 / JCM 8966 / VKM B-1809) (Halobacterium marismortui).